A 332-amino-acid chain; its full sequence is Anthranilate phosphoribosyltransferase (332 aa).

5-phospho-alpha-D-ribose 1-diphosphate contacts are provided by residues Gly-79, 82–83, Thr-87, 89–92, 107–115, and Ser-119; these read GD, NIST, and KHGNRSVSS. Gly-79 is an anthranilate binding site. Ser-91 contacts Mg(2+). An anthranilate-binding site is contributed by Asn-110. Residue Arg-165 participates in anthranilate binding. Residues Asp-223 and Glu-224 each contribute to the Mg(2+) site.

Belongs to the anthranilate phosphoribosyltransferase family. In terms of assembly, homodimer. Requires Mg(2+) as cofactor.

It catalyses the reaction N-(5-phospho-beta-D-ribosyl)anthranilate + diphosphate = 5-phospho-alpha-D-ribose 1-diphosphate + anthranilate. Its pathway is amino-acid biosynthesis; L-tryptophan biosynthesis; L-tryptophan from chorismate: step 2/5. In terms of biological role, catalyzes the transfer of the phosphoribosyl group of 5-phosphorylribose-1-pyrophosphate (PRPP) to anthranilate to yield N-(5'-phosphoribosyl)-anthranilate (PRA). This Vibrio parahaemolyticus serotype O3:K6 (strain RIMD 2210633) protein is Anthranilate phosphoribosyltransferase.